Consider the following 364-residue polypeptide: Glycerophosphodiester phosphodiesterase (364 aa).

An N-terminal signal peptide occupies residues Met1–Gly18. A lipid anchor (N-palmitoyl cysteine) is attached at Cys19. The S-diacylglycerol cysteine moiety is linked to residue Cys19. Residues Lys35–Leu360 form the GP-PDE domain. His40 (proton acceptor) is an active-site residue. Glu67 and Asp69 together coordinate Ca(2+). His82 acts as the Proton donor in catalysis. Glu175 is a binding site for Ca(2+).

The protein belongs to the glycerophosphoryl diester phosphodiesterase family. Ca(2+) is required as a cofactor. Post-translationally, contains both ester- and amide-linked fatty acids.

The protein localises to the cell outer membrane. The enzyme catalyses a sn-glycero-3-phosphodiester + H2O = an alcohol + sn-glycerol 3-phosphate + H(+). Its function is as follows. Glycerophosphodiester phosphodiesterase hydrolyzes glycerophosphodiesters into glycerol-3-phosphate (G3P) and the corresponding alcohol. Has a specific affinity for human immunoglobulin D myeloma protein. The polypeptide is Glycerophosphodiester phosphodiesterase (glpQ) (Haemophilus influenzae (strain ATCC 51907 / DSM 11121 / KW20 / Rd)).